The chain runs to 156 residues: Lipoprotein signal peptidase (156 aa).

Transmembrane regions (helical) follow at residues 8-28, 39-59, 67-87, and 99-119; these read IYIN…KWIL, VFFI…SILS, YFLL…MIKF, and SLIL…GFVI. Active-site residues include aspartate 120 and aspartate 138. A helical transmembrane segment spans residues 129 to 149; that stretch reads WHFATFNIADFSIFIGMIMII.

Belongs to the peptidase A8 family.

It is found in the cell inner membrane. The enzyme catalyses Release of signal peptides from bacterial membrane prolipoproteins. Hydrolyzes -Xaa-Yaa-Zaa-|-(S,diacylglyceryl)Cys-, in which Xaa is hydrophobic (preferably Leu), and Yaa (Ala or Ser) and Zaa (Gly or Ala) have small, neutral side chains.. It functions in the pathway protein modification; lipoprotein biosynthesis (signal peptide cleavage). Functionally, this protein specifically catalyzes the removal of signal peptides from prolipoproteins. The polypeptide is Lipoprotein signal peptidase (Buchnera aphidicola subsp. Schizaphis graminum (strain Sg)).